The following is a 250-amino-acid chain: Indole-3-glycerol phosphate synthase (250 aa).

The protein belongs to the TrpC family.

The catalysed reaction is 1-(2-carboxyphenylamino)-1-deoxy-D-ribulose 5-phosphate + H(+) = (1S,2R)-1-C-(indol-3-yl)glycerol 3-phosphate + CO2 + H2O. It participates in amino-acid biosynthesis; L-tryptophan biosynthesis; L-tryptophan from chorismate: step 4/5. This chain is Indole-3-glycerol phosphate synthase, found in Picrophilus torridus (strain ATCC 700027 / DSM 9790 / JCM 10055 / NBRC 100828 / KAW 2/3).